The primary structure comprises 255 residues: NAD kinase (255 aa).

The Proton acceptor role is filled by D44. Residues 44–45 (DG), H49, 114–115 (NE), D144, A152, 155–160 (SAYNLS), and Q216 contribute to the NAD(+) site.

The protein belongs to the NAD kinase family. It depends on a divalent metal cation as a cofactor.

Its subcellular location is the cytoplasm. It catalyses the reaction NAD(+) + ATP = ADP + NADP(+) + H(+). Involved in the regulation of the intracellular balance of NAD and NADP, and is a key enzyme in the biosynthesis of NADP. Catalyzes specifically the phosphorylation on 2'-hydroxyl of the adenosine moiety of NAD to yield NADP. In Rickettsia bellii (strain OSU 85-389), this protein is NAD kinase.